A 1365-amino-acid chain; its full sequence is Polyprotein ABA-1 (1365 aa).

Belongs to the NPA family. Post-translationally, nematode polyprotein allergens (NPAs) are synthesized as large polypeptides that are subsequently proteolytically cleaved to active polypeptide units. Pseudocoelomic fluid.

Has high binding affinity for fatty acids and retinoids. The polypeptide is Polyprotein ABA-1 (ABA-1) (Ascaris suum (Pig roundworm)).